Reading from the N-terminus, the 434-residue chain is Nicotinate phosphoribosyltransferase (434 aa).

At H242 the chain carries Phosphohistidine; by autocatalysis.

This sequence belongs to the NAPRTase family. In terms of processing, transiently phosphorylated on a His residue during the reaction cycle. Phosphorylation strongly increases the affinity for substrates and increases the rate of nicotinate D-ribonucleotide production. Dephosphorylation regenerates the low-affinity form of the enzyme, leading to product release.

It carries out the reaction nicotinate + 5-phospho-alpha-D-ribose 1-diphosphate + ATP + H2O = nicotinate beta-D-ribonucleotide + ADP + phosphate + diphosphate. It functions in the pathway cofactor biosynthesis; NAD(+) biosynthesis; nicotinate D-ribonucleotide from nicotinate: step 1/1. In terms of biological role, catalyzes the synthesis of beta-nicotinate D-ribonucleotide from nicotinate and 5-phospho-D-ribose 1-phosphate at the expense of ATP. This is Nicotinate phosphoribosyltransferase from Brucella anthropi (strain ATCC 49188 / DSM 6882 / CCUG 24695 / JCM 21032 / LMG 3331 / NBRC 15819 / NCTC 12168 / Alc 37) (Ochrobactrum anthropi).